We begin with the raw amino-acid sequence, 429 residues long: TNF receptor-associated factor family protein DDB_G0267744 (429 aa).

The RING-type; degenerate zinc finger occupies 22 to 60 (CVICSHLQVDIYQCVEGHFACKNCFLKMIELKKQCMTCR). TRAF-type zinc fingers lie at residues 151–203 (HHLK…GEFN) and 204–265 (NHQD…SNSE).

The protein belongs to the TNF receptor-associated factor family.

Its subcellular location is the cytoplasm. Its function is as follows. Probable adapter protein and signal transducer that links members of the tumor necrosis factor receptor family to different signaling pathways by association with the receptor cytoplasmic domain and kinases. The protein is TNF receptor-associated factor family protein DDB_G0267744 of Dictyostelium discoideum (Social amoeba).